The sequence spans 156 residues: ATP synthase subunit b (156 aa).

A helical transmembrane segment spans residues 11–31 (AIAFVLFVLFCMKYVWPPLMA).

The protein belongs to the ATPase B chain family. In terms of assembly, F-type ATPases have 2 components, F(1) - the catalytic core - and F(0) - the membrane proton channel. F(1) has five subunits: alpha(3), beta(3), gamma(1), delta(1), epsilon(1). F(0) has three main subunits: a(1), b(2) and c(10-14). The alpha and beta chains form an alternating ring which encloses part of the gamma chain. F(1) is attached to F(0) by a central stalk formed by the gamma and epsilon chains, while a peripheral stalk is formed by the delta and b chains.

It is found in the cell inner membrane. Functionally, f(1)F(0) ATP synthase produces ATP from ADP in the presence of a proton or sodium gradient. F-type ATPases consist of two structural domains, F(1) containing the extramembraneous catalytic core and F(0) containing the membrane proton channel, linked together by a central stalk and a peripheral stalk. During catalysis, ATP synthesis in the catalytic domain of F(1) is coupled via a rotary mechanism of the central stalk subunits to proton translocation. In terms of biological role, component of the F(0) channel, it forms part of the peripheral stalk, linking F(1) to F(0). This chain is ATP synthase subunit b, found in Citrobacter koseri (strain ATCC BAA-895 / CDC 4225-83 / SGSC4696).